The primary structure comprises 671 residues: DNA ligase (671 aa).

Residues aspartate 32–aspartate 36, serine 81–leucine 82, and glutamate 113 contribute to the NAD(+) site. The active-site N6-AMP-lysine intermediate is lysine 115. The NAD(+) site is built by arginine 136, glutamate 173, lysine 290, and lysine 314. 4 residues coordinate Zn(2+): cysteine 408, cysteine 411, cysteine 426, and cysteine 432. The 79-residue stretch at glutamate 593–serine 671 folds into the BRCT domain.

It belongs to the NAD-dependent DNA ligase family. LigA subfamily. Mg(2+) serves as cofactor. Mn(2+) is required as a cofactor.

It carries out the reaction NAD(+) + (deoxyribonucleotide)n-3'-hydroxyl + 5'-phospho-(deoxyribonucleotide)m = (deoxyribonucleotide)n+m + AMP + beta-nicotinamide D-nucleotide.. Functionally, DNA ligase that catalyzes the formation of phosphodiester linkages between 5'-phosphoryl and 3'-hydroxyl groups in double-stranded DNA using NAD as a coenzyme and as the energy source for the reaction. It is essential for DNA replication and repair of damaged DNA. This is DNA ligase from Shigella flexneri serotype 5b (strain 8401).